Here is a 513-residue protein sequence, read N- to C-terminus: 2,3-bisphosphoglycerate-independent phosphoglycerate mutase (513 aa).

Residues aspartate 13 and serine 63 each contribute to the Mn(2+) site. Serine 63 serves as the catalytic Phosphoserine intermediate. Residues histidine 124, arginine 154–aspartate 155, arginine 186, arginine 192, arginine 262–arginine 265, and lysine 335 each bind substrate. Mn(2+)-binding residues include aspartate 402, histidine 406, aspartate 443, histidine 444, and histidine 462.

It belongs to the BPG-independent phosphoglycerate mutase family. Monomer. Mn(2+) is required as a cofactor.

It catalyses the reaction (2R)-2-phosphoglycerate = (2R)-3-phosphoglycerate. It participates in carbohydrate degradation; glycolysis; pyruvate from D-glyceraldehyde 3-phosphate: step 3/5. Its function is as follows. Catalyzes the interconversion of 2-phosphoglycerate and 3-phosphoglycerate. The protein is 2,3-bisphosphoglycerate-independent phosphoglycerate mutase of Photobacterium profundum (strain SS9).